Reading from the N-terminus, the 112-residue chain is Large ribosomal subunit protein bL17 (112 aa).

Belongs to the bacterial ribosomal protein bL17 family. As to quaternary structure, part of the 50S ribosomal subunit. Contacts protein L32.

The chain is Large ribosomal subunit protein bL17 from Caldanaerobacter subterraneus subsp. tengcongensis (strain DSM 15242 / JCM 11007 / NBRC 100824 / MB4) (Thermoanaerobacter tengcongensis).